The following is a 297-amino-acid chain: Tryptophan 2,3-dioxygenase (297 aa).

Substrate-binding positions include 51 to 55, Tyr-113, and Arg-117; that span reads FIIQH. His-240 provides a ligand contact to heme. Thr-254 serves as a coordination point for substrate.

Belongs to the tryptophan 2,3-dioxygenase family. In terms of assembly, homotetramer. Heme is required as a cofactor.

The enzyme catalyses L-tryptophan + O2 = N-formyl-L-kynurenine. Its pathway is amino-acid degradation; L-tryptophan degradation via kynurenine pathway; L-kynurenine from L-tryptophan: step 1/2. In terms of biological role, heme-dependent dioxygenase that catalyzes the oxidative cleavage of the L-tryptophan (L-Trp) pyrrole ring and converts L-tryptophan to N-formyl-L-kynurenine. Catalyzes the oxidative cleavage of the indole moiety. The protein is Tryptophan 2,3-dioxygenase of Xanthomonas oryzae pv. oryzae (strain MAFF 311018).